The primary structure comprises 402 residues: Multidrug resistance protein MdtH (402 aa).

The Cytoplasmic segment spans residues 1 to 12; that stretch reads MSRVSQARNLGK. A helical membrane pass occupies residues 13–33; sequence YFLLIDNMLVVLGFFVVFPLI. At 34–98 the chain is on the periplasmic side; that stretch reads SIRFVDQMGW…GFATMGIAHE (65 aa). Residues 99–116 traverse the membrane as a helical segment; sequence PWLLWFSCFLSGLGGTLF. Residues 117 to 138 lie on the Cytoplasmic side of the membrane; it reads DPPRSALVVKLIRPEQRDRFFS. Residues 139–159 form a helical membrane-spanning segment; the sequence is LLMMQDSAGAVIGALLGSWLL. Residues 160 to 164 lie on the Periplasmic side of the membrane; the sequence is QYDFR. Residues 165–185 traverse the membrane as a helical segment; the sequence is LVCATGAILFILCALFNAWLL. Over 186-213 the chain is Cytoplasmic; sequence PAWKLSTVRTPVREGMRRVMSDKRFVTY. A helical membrane pass occupies residues 214-234; it reads VLTLAGYYMLAVQVMLMLPIM. Residues 235 to 243 are Periplasmic-facing; the sequence is VNDIAGSPA. Residues 244-264 traverse the membrane as a helical segment; it reads AVKWMYAIEACLSLTLLYPIA. Over 265–276 the chain is Cytoplasmic; the sequence is RWSEKRFRLEHR. The chain crosses the membrane as a helical span at residues 277-297; that stretch reads LMAGLLVMSLSMLPIGMVGNL. Residues 298–299 are Periplasmic-facing; sequence QQ. Residues 300–320 traverse the membrane as a helical segment; that stretch reads LFTLICAFYIGSVIAEPARET. Residues 321–339 lie on the Cytoplasmic side of the membrane; it reads LSASLADARARGSYMGFSR. A helical membrane pass occupies residues 340-360; it reads LGLAIGGAIGYIGGGWLFDMG. The Periplasmic segment spans residues 361–367; it reads KALAQPE. The chain crosses the membrane as a helical span at residues 368–388; sequence LPWMMLGIIGFITFLALGWQF. Residues 389-402 are Cytoplasmic-facing; that stretch reads SHKRTPRRMLEPGA.

This sequence belongs to the major facilitator superfamily. DHA1 family. MdtH (TC 2.A.1.2.21) subfamily.

Its subcellular location is the cell inner membrane. The protein is Multidrug resistance protein MdtH of Salmonella typhimurium (strain LT2 / SGSC1412 / ATCC 700720).